The chain runs to 376 residues: Glutamate 5-kinase (376 aa).

Lys17 lines the ATP pocket. Residues Ser57, Asp144, and Asn156 each contribute to the substrate site. Residue 176 to 177 (TD) participates in ATP binding. The PUA domain occupies 283-361 (KGQLVLDEGA…SEINQLLGYS (79 aa)).

This sequence belongs to the glutamate 5-kinase family.

The protein localises to the cytoplasm. It catalyses the reaction L-glutamate + ATP = L-glutamyl 5-phosphate + ADP. Its pathway is amino-acid biosynthesis; L-proline biosynthesis; L-glutamate 5-semialdehyde from L-glutamate: step 1/2. Catalyzes the transfer of a phosphate group to glutamate to form L-glutamate 5-phosphate. This Hydrogenovibrio crunogenus (strain DSM 25203 / XCL-2) (Thiomicrospira crunogena) protein is Glutamate 5-kinase.